A 475-amino-acid polypeptide reads, in one-letter code: Ribulose bisphosphate carboxylase large chain (475 aa).

Substrate-binding residues include N123 and T173. K175 (proton acceptor) is an active-site residue. K177 is a substrate binding site. Mg(2+)-binding residues include K201, D203, and E204. N6-carboxylysine is present on K201. H294 (proton acceptor) is an active-site residue. The substrate site is built by R295, H327, and S379.

The protein belongs to the RuBisCO large chain family. Type I subfamily. As to quaternary structure, heterohexadecamer of 8 large chains and 8 small chains; disulfide-linked. The disulfide link is formed within the large subunit homodimers. Interacts with assembly factor Raf1 which helps form the holoenzyme, most interaction (and folding) occurs in the cytoplasm. Mg(2+) is required as a cofactor. The disulfide bond which can form in the large chain dimeric partners within the hexadecamer appears to be associated with oxidative stress and protein turnover.

It is found in the carboxysome. It localises to the cytoplasm. It catalyses the reaction 2 (2R)-3-phosphoglycerate + 2 H(+) = D-ribulose 1,5-bisphosphate + CO2 + H2O. The enzyme catalyses D-ribulose 1,5-bisphosphate + O2 = 2-phosphoglycolate + (2R)-3-phosphoglycerate + 2 H(+). Its function is as follows. RuBisCO catalyzes two reactions: the carboxylation of D-ribulose 1,5-bisphosphate, the primary event in carbon dioxide fixation, as well as the oxidative fragmentation of the pentose substrate in the photorespiration process. Both reactions occur simultaneously and in competition at the same active site. In Thermosynechococcus vestitus (strain NIES-2133 / IAM M-273 / BP-1), this protein is Ribulose bisphosphate carboxylase large chain.